The primary structure comprises 279 residues: Apolipoprotein L domain-containing protein 1 (279 aa).

The next 3 helical transmembrane spans lie at 83 to 105, 122 to 142, and 192 to 212; these read SLVA…IVGL, GLGV…SLIF, and IALY…FLIP. Residues 226-253 are a coiled coil; sequence LKAKIQKLAESLESCTGALDELSEQLES.

The protein belongs to the apolipoprotein L family. As to expression, expressed in neonatal dermal microvascular endothelial cells.

Its subcellular location is the cell membrane. It is found in the cell junction. It localises to the cytoplasmic vesicle. The protein resides in the secretory vesicle. Functionally, is a modulator of endothelial barrier permeability, required for proper organization of endothelial cell-cell junctions and cytoskeleton. It also plays a role in the modulation of secretory autophagy. May affect blood-brain barrier permeability. In Homo sapiens (Human), this protein is Apolipoprotein L domain-containing protein 1 (APOLD1).